Here is a 167-residue protein sequence, read N- to C-terminus: Putative pre-16S rRNA nuclease (167 aa).

The tract at residues 1-24 (MVLTQHRVPDRPGDPDQDPGRGRR) is disordered. Residues 7-21 (RVPDRPGDPDQDPGR) show a composition bias toward basic and acidic residues.

Belongs to the YqgF nuclease family.

Its subcellular location is the cytoplasm. Could be a nuclease involved in processing of the 5'-end of pre-16S rRNA. The polypeptide is Putative pre-16S rRNA nuclease (Mycolicibacterium paratuberculosis (strain ATCC BAA-968 / K-10) (Mycobacterium paratuberculosis)).